The sequence spans 386 residues: Indole-3-acetate O-methyltransferase 1 (386 aa).

Residue tyrosine 30 participates in S-adenosyl-L-methionine binding. Substrate contacts are provided by residues tyrosine 30 and 33 to 37; that span reads NSQAQ. S-adenosyl-L-methionine-binding positions include glycine 72, 72 to 73, asparagine 78, 108 to 111, aspartate 110, 152 to 154, and 169 to 171; these read GC, FSDL, SFY, and AFS. Residue 170–174 participates in substrate binding; the sequence is FSLHW. Residues asparagine 191, valine 195, arginine 277, aspartate 278, phenylalanine 280, and asparagine 281 each coordinate Mg(2+). Substrate is bound at residue serine 334.

The protein belongs to the methyltransferase superfamily. SABATH family. As to quaternary structure, homodimer. It depends on Mg(2+) as a cofactor. As to expression, expressed in seedling roots and leaves. Expressed in the stigma, funiculus, and vascular bundles in sepals, petals and stamens.

It catalyses the reaction (indol-3-yl)acetate + S-adenosyl-L-methionine = methyl (indol-3-yl)acetate + S-adenosyl-L-homocysteine. Functionally, catalyzes the methylation of the free carboxyl end of the plant hormone indole-3-acetic acid (IAA). Converts IAA to IAA methyl ester (MeIAA). Regulates IAA activities by IAA methylation. Methylation of IAA plays an important role in regulating plant development and auxin homeostasis. Required for correct leaf pattern formation. MeIAA seems to be an inactive form of IAA. The sequence is that of Indole-3-acetate O-methyltransferase 1 (IAMT1) from Arabidopsis thaliana (Mouse-ear cress).